We begin with the raw amino-acid sequence, 229 residues long: Adenine nucleotide translocase lysine N-methyltransferase (229 aa).

The segment at 1–22 (MDQDDPAEALTELREKRLGLLE) is N-terminal sequence (NTS). Residues 20-42 (LLEIVQAAAGSGLAVYTIWALLL) form a helical membrane-spanning segment. The segment at 43 to 77 (QPGFRRVPLRLQVPYVGASARQVENVLSLLRGRPG) is methyltransferase (MTase). The interval 43–77 (QPGFRRVPLRLQVPYVGASARQVENVLSLLRGRPG) is pre-methyltransferase (preMT).

The protein belongs to the ANT/ATPSC lysine N-methyltransferase family.

Its subcellular location is the mitochondrion membrane. The catalysed reaction is L-lysyl-[protein] + 3 S-adenosyl-L-methionine = N(6),N(6),N(6)-trimethyl-L-lysyl-[protein] + 3 S-adenosyl-L-homocysteine + 3 H(+). Mitochondrial protein-lysine N-methyltransferase that trimethylates adenine nucleotide translocases ANT2/SLC25A5 and ANT3/SLC25A6, thereby regulating mitochondrial respiration. Probably also trimethylates ANT1/SLC25A4. The sequence is that of Adenine nucleotide translocase lysine N-methyltransferase from Mus musculus (Mouse).